A 306-amino-acid polypeptide reads, in one-letter code: Pantothenate kinase (306 aa).

Residue 91–98 coordinates ATP; the sequence is GSVAVGKS.

It belongs to the prokaryotic pantothenate kinase family.

The protein resides in the cytoplasm. The catalysed reaction is (R)-pantothenate + ATP = (R)-4'-phosphopantothenate + ADP + H(+). Its pathway is cofactor biosynthesis; coenzyme A biosynthesis; CoA from (R)-pantothenate: step 1/5. The protein is Pantothenate kinase of Streptococcus suis (strain 98HAH33).